The sequence spans 217 residues: Pyridoxine/pyridoxamine 5'-phosphate oxidase (217 aa).

Substrate-binding positions include 13 to 16 (RREY) and lysine 71. FMN contacts are provided by residues 66-71 (RIVLLK), 81-82 (YT), arginine 87, lysine 88, and glutamine 110. Positions 128, 132, and 136 each coordinate substrate. FMN contacts are provided by residues 145-146 (QS) and tryptophan 190. 196-198 (RLH) serves as a coordination point for substrate. Arginine 200 serves as a coordination point for FMN.

It belongs to the pyridoxamine 5'-phosphate oxidase family. Homodimer. The cofactor is FMN.

It catalyses the reaction pyridoxamine 5'-phosphate + O2 + H2O = pyridoxal 5'-phosphate + H2O2 + NH4(+). The catalysed reaction is pyridoxine 5'-phosphate + O2 = pyridoxal 5'-phosphate + H2O2. It participates in cofactor metabolism; pyridoxal 5'-phosphate salvage; pyridoxal 5'-phosphate from pyridoxamine 5'-phosphate: step 1/1. The protein operates within cofactor metabolism; pyridoxal 5'-phosphate salvage; pyridoxal 5'-phosphate from pyridoxine 5'-phosphate: step 1/1. Catalyzes the oxidation of either pyridoxine 5'-phosphate (PNP) or pyridoxamine 5'-phosphate (PMP) into pyridoxal 5'-phosphate (PLP). This chain is Pyridoxine/pyridoxamine 5'-phosphate oxidase, found in Yersinia enterocolitica serotype O:8 / biotype 1B (strain NCTC 13174 / 8081).